A 794-amino-acid polypeptide reads, in one-letter code: Solute carrier family 26 member 9 (794 aa).

At 1–70 (MNKVRPRYII…WLPKYNIKGN (70 aa)) the chain is on the cytoplasmic side. A helical membrane pass occupies residues 71–96 (LLNDALGGISAGTIQIPQGMAFALLA). Over 97–100 (NLPP) the chain is Extracellular. A helical transmembrane segment spans residues 101 to 109 (VNGLYSSFF). Topologically, residues 110–129 (PLVVYFFMGGIPQMVPGTFA) are cytoplasmic. The chain crosses the membrane as a helical span at residues 130 to 142 (VISIIVGNVCLKL). Topologically, residues 143–160 (APESHFQNVTSNGTITNI) are extracellular. A helical transmembrane segment spans residues 161–189 (EAMNTARMHISATLACLTAIIQIALSFVQ). Residues 190 to 199 (FGFVAIYLSE) are Cytoplasmic-facing. A helical transmembrane segment spans residues 200–222 (SFIRGFMTAAGLQILISVLKYIF). The Extracellular portion of the chain corresponds to 223–235 (GVSIPPYSGVLAI). The helical intramembrane region spans 236–244 (IYTFIDICK). Residues 245-252 (ELPKTNVA) lie on the Extracellular side of the membrane. Residues 253 to 273 (SLIFALISTVLLIIVKELNMK) form a helical membrane-spanning segment. Residues 274 to 284 (FMHKIRFPIPM) lie on the Cytoplasmic side of the membrane. A helical transmembrane segment spans residues 285-297 (EIIIVIVATAVSG). At 298–332 (SFKLPERYHMNVVGHIPLGFPSPTVPNVTQWDEMV) the chain is on the extracellular side. A helical transmembrane segment spans residues 333–356 (GTAFSLAIVGYVINLAMGRTLGAK). Residues 357–363 (HGFDVDA) are Cytoplasmic-facing. The helical transmembrane segment at 364 to 377 (NQEMLALGSGNFFG) threads the bilayer. The Extracellular segment spans residues 378–388 (SFFFIHVICCA). A helical membrane pass occupies residues 389–398 (LSVTLAVDGA). The Cytoplasmic segment spans residues 399-403 (GGKSQ). A helical membrane pass occupies residues 404–417 (IASFFVMMSVMVTI). The Extracellular portion of the chain corresponds to 418 to 429 (LALGTYLNPLPK). A helical transmembrane segment spans residues 430-455 (SVLGALIAVNLKNSLKQLSDPFYLWK). The Cytoplasmic segment spans residues 456–459 (KSKL). A helical transmembrane segment spans residues 460–474 (DCLVWLVSFFSTFIL). At 475–477 (GLP) the chain is on the extracellular side. The helical transmembrane segment at 478–496 (YGLAVGVAFSILVVIFNTQ) threads the bilayer. The Cytoplasmic portion of the chain corresponds to 497-794 (FRNGSSLNQV…MFQTEIQTAL (298 aa)). Residues 517-739 (VYSKVQPIDG…ITVHDAVLYA (223 aa)) enclose the STAS domain.

Belongs to the SLC26A/SulP transporter (TC 2.A.53) family. Homodimer.

It localises to the cell membrane. Its subcellular location is the endomembrane system. The enzyme catalyses chloride(in) = chloride(out). It catalyses the reaction hydrogencarbonate(in) + chloride(out) = hydrogencarbonate(out) + chloride(in). Inhibited by ammonium and thiosulfate. Functionally, ion transporter that can act both as an ion channel and anion exchanger. Mainly acts as a chloride channel, which mediate uncoupled chloride anion transport in an alternate-access mechanism where a saturable binding site is alternately exposed to either one or the other side of the membrane. Also acts as a DIDS- and thiosulfate- sensitive anion exchanger the exchange of chloride for bicarbonate ions across the cell membrane. The chain is Solute carrier family 26 member 9 (slc26a9) from Xenopus tropicalis (Western clawed frog).